The sequence spans 134 residues: Protein LctB (134 aa).

The chain is Protein LctB (lctB) from Geobacillus stearothermophilus (Bacillus stearothermophilus).